The sequence spans 410 residues: Exodeoxyribonuclease 7 large subunit (410 aa).

This sequence belongs to the XseA family. In terms of assembly, heterooligomer composed of large and small subunits.

Its subcellular location is the cytoplasm. The catalysed reaction is Exonucleolytic cleavage in either 5'- to 3'- or 3'- to 5'-direction to yield nucleoside 5'-phosphates.. Its function is as follows. Bidirectionally degrades single-stranded DNA into large acid-insoluble oligonucleotides, which are then degraded further into small acid-soluble oligonucleotides. This is Exodeoxyribonuclease 7 large subunit from Alkaliphilus metalliredigens (strain QYMF).